Here is a 385-residue protein sequence, read N- to C-terminus: DNA replication and repair protein RecF (385 aa).

An ATP-binding site is contributed by glycine 30–threonine 37.

This sequence belongs to the RecF family.

The protein localises to the cytoplasm. The RecF protein is involved in DNA metabolism; it is required for DNA replication and normal SOS inducibility. RecF binds preferentially to single-stranded, linear DNA. It also seems to bind ATP. The chain is DNA replication and repair protein RecF from Leifsonia xyli subsp. xyli (strain CTCB07).